The primary structure comprises 494 residues: Nuclear distribution protein PAC1 (494 aa).

A LisH domain is found at 14–46; that stretch reads QKNELDKSVLRYLNWNYKQTVRHEHAQDYESVR. Residues 90-123 are a coiled coil; the sequence is NSIVRLQKKIIELEQNTETLVSQIKDLNTQVSEL. WD repeat units follow at residues 153–192, 196–244, 251–292, 295–334, 347–395, 415–454, and 457–492; these read NVES…IPLA, SHTK…CKFQ, GHEH…SLKT, PHSQ…SVGT, HFIE…LMAH, GHLS…HVWE, and HTGF…SNVF.

It belongs to the WD repeat LIS1/nudF family. In terms of assembly, self-associates. Interacts with NDL1 and dynein.

The protein resides in the cytoplasm. The protein localises to the cytoskeleton. Its subcellular location is the spindle pole. Functionally, positively regulates the activity of the minus-end directed microtubule motor protein dynein. Plays a central role in positioning the mitotic spindle at the bud neck during cell division. Targets cytoplasmic dynein to microtubule plus ends, thereby promoting dynein-mediated microtubule sliding along the bud cortex and consequently the movement of the mitotic spindle to the bud neck. This is Nuclear distribution protein PAC1 from Saccharomyces cerevisiae (strain YJM789) (Baker's yeast).